The sequence spans 144 residues: Cell division protein SepF (144 aa).

A compositionally biased stretch (polar residues) spans T21–P38. The interval T21 to N40 is disordered.

Belongs to the SepF family. As to quaternary structure, homodimer. Interacts with FtsZ.

It is found in the cytoplasm. Cell division protein that is part of the divisome complex and is recruited early to the Z-ring. Probably stimulates Z-ring formation, perhaps through the cross-linking of FtsZ protofilaments. Its function overlaps with FtsA. The polypeptide is Cell division protein SepF (Latilactobacillus sakei subsp. sakei (strain 23K) (Lactobacillus sakei subsp. sakei)).